The chain runs to 93 residues: MTKSELIERLCAEQTHLSAKEVEDAVKDILEHMASTLESGDRIEIRGFGSFSLHYREPRVGRNPKTGDKVELEGKYVPHFKPGKELRERVNLG.

The protein belongs to the bacterial histone-like protein family. As to quaternary structure, heterodimer of an alpha and a beta chain.

This protein is one of the two subunits of integration host factor, a specific DNA-binding protein that functions in genetic recombination as well as in transcriptional and translational control. This chain is Integration host factor subunit beta, found in Vibrio parahaemolyticus serotype O3:K6 (strain RIMD 2210633).